We begin with the raw amino-acid sequence, 122 residues long: Early nodulin-10 (122 aa).

A signal peptide spans 1 to 36; it reads MTCTLKSPPKMASFFLSSLVLMFIAALILLPQGLAA. Tandem repeats lie at residues 45–49, 51–55, 58–62, 68–72, 77–81, 82–86, 88–92, 99–103, 106–110, and 113–117. The 10 X 5 AA approximate repeats of P-P-X-X-X stretch occupies residues 45–117; it reads PPDSELPPYR…FYKQAPPSQK (73 aa). The tract at residues 90-122 is disordered; it reads TYKPSKKRLPPPFQKLPPFYKQAPPSQKLPRVN.

Root nodules. In early nodules, expressed only in the interior of the developing nodule with no expression in other nodule tissues, including meristem. In slightly older nodules, expressed in almost all cells of the central zone. In more mature nodules, expression is restricted to the invasion zone.

This Medicago sativa (Alfalfa) protein is Early nodulin-10 (ENOD10).